The primary structure comprises 269 residues: NAD kinase (269 aa).

The active-site Proton acceptor is Asp-45. Residues 45–46, 122–123, Arg-149, Asp-151, and Ala-186 each bind NAD(+); these read DG and NE.

It belongs to the NAD kinase family. A divalent metal cation serves as cofactor.

The protein localises to the cytoplasm. The catalysed reaction is NAD(+) + ATP = ADP + NADP(+) + H(+). Involved in the regulation of the intracellular balance of NAD and NADP, and is a key enzyme in the biosynthesis of NADP. Catalyzes specifically the phosphorylation on 2'-hydroxyl of the adenosine moiety of NAD to yield NADP. This Staphylococcus haemolyticus (strain JCSC1435) protein is NAD kinase.